A 1658-amino-acid chain; its full sequence is Protein TIC 214 (1658 aa).

The next 6 membrane-spanning stretches (helical) occupy residues 28–48 (FGLY…ILTI), 52–72 (LLGG…GQLI), 82–102 (IYVM…YMLF), 130–150 (IFLD…SPVF), 165–185 (ISFV…FINL), and 199–219 (VNYP…ILAL).

It belongs to the TIC214 family. As to quaternary structure, part of the Tic complex.

The protein localises to the plastid. It localises to the chloroplast inner membrane. In terms of biological role, involved in protein precursor import into chloroplasts. May be part of an intermediate translocation complex acting as a protein-conducting channel at the inner envelope. The chain is Protein TIC 214 from Huperzia lucidula (Shining clubmoss).